The chain runs to 252 residues: Protein BTG3 (252 aa).

A disordered region spans residues 138–162 (VTSDYHSGSSSSDEETSKEMEVKPS).

This sequence belongs to the BTG family. Ubiquitous. High expression in the ventricular zone of the developing central nervous system. High in ovary, testis, prostate, thymus and lung.

Functionally, overexpression impairs serum-induced cell cycle progression from the G0/G1 to S phase. This Homo sapiens (Human) protein is Protein BTG3 (BTG3).